The sequence spans 501 residues: Lysine--tRNA ligase (501 aa).

2 residues coordinate Mg(2+): Glu-404 and Glu-411.

It belongs to the class-II aminoacyl-tRNA synthetase family. As to quaternary structure, homodimer. Requires Mg(2+) as cofactor.

The protein resides in the cytoplasm. It catalyses the reaction tRNA(Lys) + L-lysine + ATP = L-lysyl-tRNA(Lys) + AMP + diphosphate. The sequence is that of Lysine--tRNA ligase from Campylobacter jejuni subsp. jejuni serotype O:6 (strain 81116 / NCTC 11828).